A 275-amino-acid polypeptide reads, in one-letter code: tRNA pseudouridine synthase A (275 aa).

Asp56 functions as the Nucleophile in the catalytic mechanism. Tyr114 contacts substrate.

It belongs to the tRNA pseudouridine synthase TruA family. In terms of assembly, homodimer.

The enzyme catalyses uridine(38/39/40) in tRNA = pseudouridine(38/39/40) in tRNA. In terms of biological role, formation of pseudouridine at positions 38, 39 and 40 in the anticodon stem and loop of transfer RNAs. In Polynucleobacter asymbioticus (strain DSM 18221 / CIP 109841 / QLW-P1DMWA-1) (Polynucleobacter necessarius subsp. asymbioticus), this protein is tRNA pseudouridine synthase A.